The sequence spans 161 residues: Transcription antitermination protein NusB (161 aa).

This sequence belongs to the NusB family.

Involved in transcription antitermination. Required for transcription of ribosomal RNA (rRNA) genes. Binds specifically to the boxA antiterminator sequence of the ribosomal RNA (rrn) operons. The protein is Transcription antitermination protein NusB of Nitrobacter winogradskyi (strain ATCC 25391 / DSM 10237 / CIP 104748 / NCIMB 11846 / Nb-255).